We begin with the raw amino-acid sequence, 184 residues long: 3-hydroxydecanoyl-[acyl-carrier-protein] dehydratase (184 aa).

Residue H77 is part of the active site.

It belongs to the thioester dehydratase family. FabA subfamily. Homodimer.

Its subcellular location is the cytoplasm. The enzyme catalyses a (3R)-hydroxyacyl-[ACP] = a (2E)-enoyl-[ACP] + H2O. It carries out the reaction (3R)-hydroxydecanoyl-[ACP] = (2E)-decenoyl-[ACP] + H2O. It catalyses the reaction (2E)-decenoyl-[ACP] = (3Z)-decenoyl-[ACP]. Its pathway is lipid metabolism; fatty acid biosynthesis. Necessary for the introduction of cis unsaturation into fatty acids. Catalyzes the dehydration of (3R)-3-hydroxydecanoyl-ACP to E-(2)-decenoyl-ACP and then its isomerization to Z-(3)-decenoyl-ACP. Can catalyze the dehydratase reaction for beta-hydroxyacyl-ACPs with saturated chain lengths up to 16:0, being most active on intermediate chain length. The protein is 3-hydroxydecanoyl-[acyl-carrier-protein] dehydratase of Hyphomonas neptunium (strain ATCC 15444).